A 409-amino-acid polypeptide reads, in one-letter code: Argininosuccinate synthase (409 aa).

Residues Ala12–Ser20 and Ala39 contribute to the ATP site. Residues Tyr90 and Ser95 each coordinate L-citrulline. Gly120 lines the ATP pocket. 3 residues coordinate L-aspartate: Thr122, Asn126, and Asp127. Asn126 contributes to the L-citrulline binding site. Arg130, Ser181, Ser190, Glu266, and Tyr278 together coordinate L-citrulline.

The protein belongs to the argininosuccinate synthase family. Type 1 subfamily. In terms of assembly, homotetramer.

The protein resides in the cytoplasm. It carries out the reaction L-citrulline + L-aspartate + ATP = 2-(N(omega)-L-arginino)succinate + AMP + diphosphate + H(+). Its pathway is amino-acid biosynthesis; L-arginine biosynthesis; L-arginine from L-ornithine and carbamoyl phosphate: step 2/3. This chain is Argininosuccinate synthase, found in Gluconacetobacter diazotrophicus (strain ATCC 49037 / DSM 5601 / CCUG 37298 / CIP 103539 / LMG 7603 / PAl5).